The following is a 2224-amino-acid chain: Protein sidekick (2224 aa).

The first 47 residues, 1–47 (MLKSAASSLRRRRPKTTITATLAIEMPSQPKLASLLAVLVLLCYCDS), serve as a signal peptide directing secretion. At 48 to 2001 (CFFCYADANL…LQHKPFYRQT (1954 aa)) the chain is on the extracellular side. An Ig-like C2-type 1 domain is found at 72–155 (PRFTTHPSSS…SIFSEKSDVV (84 aa)). Residues C95 and C138 are joined by a disulfide bond. 4 N-linked (GlcNAc...) asparagine glycosylation sites follow: N164, N250, N318, and N327. Ig-like C2-type domains are found at residues 261–355 (PEII…ARLQ), 359–445 (PPLF…NSAS), 455–541 (PIME…AYLS), and 546–636 (TQII…ARLS). 2 disulfide bridges follow: C283-C336 and C382-C433. Residues N463, N485, and N491 are each glycosylated (N-linked (GlcNAc...) asparagine). 2 disulfide bridges follow: C476–C525 and C567–C620. N628, N661, N707, N809, N870, N942, N1019, N1094, N1109, N1172, N1203, N1282, N1329, N1379, N1414, and N1420 each carry an N-linked (GlcNAc...) asparagine glycan. 13 Fibronectin type-III domains span residues 643–753 (PPSN…LPQE), 758–855 (PPVG…TKEG), 860–967 (PPTN…TMDD), 971–1065 (EVTG…VEPV), 1069–1164 (APTA…TIQA), 1169–1270 (PPFN…TREA), 1275–1372 (GPLD…TFED), 1376–1469 (VPSN…TNNR), 1474–1570 (APSV…TLPA), 1575–1677 (GVGG…VGEA), 1682–1785 (EPRA…TLPG), 1789–1883 (APLH…GPQD), and 1885–1984 (SPVA…TPSK). N1843 and N1876 each carry an N-linked (GlcNAc...) asparagine glycan. Residues 2002–2022 (WFMVSLAATSIVIIVMVIAVL) traverse the membrane as a helical segment. Over 2023 to 2224 (CVKSKSYKYK…APLPGFSSFV (202 aa)) the chain is Cytoplasmic. 2 disordered regions span residues 2068-2157 (TLNS…RSDP) and 2171-2195 (LRQSWKKTKPVRNYSSYTDSEPEGS). S2071 carries the phosphoserine modification. The segment covering 2073-2085 (GTLRSGTLGTLGR) has biased composition (low complexity). T2074 carries the post-translational modification Phosphothreonine. Composition is skewed to basic and acidic residues over residues 2112–2122 (HSDEESLKCYD) and 2144–2157 (QHSESENESVRSDP). A phosphoserine mark is found at S2113 and S2117.

The protein belongs to the sidekick family.

Its subcellular location is the membrane. In terms of biological role, participates in homotypic or heterotypic interactions in the eye during pattern formation to prevent extra cells from joining the precluster and differentiating as photoreceptor cells. The sequence is that of Protein sidekick from Drosophila melanogaster (Fruit fly).